A 933-amino-acid polypeptide reads, in one-letter code: Valine--tRNA ligase (933 aa).

The 'HIGH' region motif lies at 58–68 (PNVTGSLHMGH). The 'KMSKS' region signature appears at 556–560 (KMSKS). K559 is a binding site for ATP. 2 coiled-coil regions span residues 807–833 (VTKN…ANKV) and 864–933 (EGLV…LGLK).

It belongs to the class-I aminoacyl-tRNA synthetase family. ValS type 1 subfamily. Monomer.

The protein localises to the cytoplasm. It catalyses the reaction tRNA(Val) + L-valine + ATP = L-valyl-tRNA(Val) + AMP + diphosphate. In terms of biological role, catalyzes the attachment of valine to tRNA(Val). As ValRS can inadvertently accommodate and process structurally similar amino acids such as threonine, to avoid such errors, it has a 'posttransfer' editing activity that hydrolyzes mischarged Thr-tRNA(Val) in a tRNA-dependent manner. The sequence is that of Valine--tRNA ligase from Prochlorococcus marinus (strain SARG / CCMP1375 / SS120).